Here is a 417-residue protein sequence, read N- to C-terminus: Serine hydroxymethyltransferase 2 (417 aa).

(6S)-5,6,7,8-tetrahydrofolate-binding positions include Leu-121 and Gly-125–Leu-127. The residue at position 230 (Lys-230) is an N6-(pyridoxal phosphate)lysine. Ser-355–Phe-357 is a (6S)-5,6,7,8-tetrahydrofolate binding site.

Belongs to the SHMT family. Homodimer. Pyridoxal 5'-phosphate is required as a cofactor.

It is found in the cytoplasm. The catalysed reaction is (6R)-5,10-methylene-5,6,7,8-tetrahydrofolate + glycine + H2O = (6S)-5,6,7,8-tetrahydrofolate + L-serine. The protein operates within one-carbon metabolism; tetrahydrofolate interconversion. It participates in amino-acid biosynthesis; glycine biosynthesis; glycine from L-serine: step 1/1. Its function is as follows. Catalyzes the reversible interconversion of serine and glycine with tetrahydrofolate (THF) serving as the one-carbon carrier. This reaction serves as the major source of one-carbon groups required for the biosynthesis of purines, thymidylate, methionine, and other important biomolecules. Also exhibits THF-independent aldolase activity toward beta-hydroxyamino acids, producing glycine and aldehydes, via a retro-aldol mechanism. In Colwellia psychrerythraea (strain 34H / ATCC BAA-681) (Vibrio psychroerythus), this protein is Serine hydroxymethyltransferase 2.